We begin with the raw amino-acid sequence, 77 residues long: Large ribosomal subunit protein bL28 (77 aa).

It belongs to the bacterial ribosomal protein bL28 family.

This is Large ribosomal subunit protein bL28 from Verminephrobacter eiseniae (strain EF01-2).